Here is an 85-residue protein sequence, read N- to C-terminus: Cell division topological specificity factor (85 aa).

Belongs to the MinE family.

Functionally, prevents the cell division inhibition by proteins MinC and MinD at internal division sites while permitting inhibition at polar sites. This ensures cell division at the proper site by restricting the formation of a division septum at the midpoint of the long axis of the cell. This chain is Cell division topological specificity factor, found in Xylella fastidiosa (strain M12).